The following is a 482-amino-acid chain: Glycogen synthase (482 aa).

ADP-alpha-D-glucose is bound at residue lysine 21.

It belongs to the glycosyltransferase 1 family. Bacterial/plant glycogen synthase subfamily.

The catalysed reaction is [(1-&gt;4)-alpha-D-glucosyl](n) + ADP-alpha-D-glucose = [(1-&gt;4)-alpha-D-glucosyl](n+1) + ADP + H(+). The protein operates within glycan biosynthesis; glycogen biosynthesis. Its function is as follows. Synthesizes alpha-1,4-glucan chains using ADP-glucose. The chain is Glycogen synthase from Clostridium perfringens (strain 13 / Type A).